Reading from the N-terminus, the 296-residue chain is Phosphoribosylaminoimidazole-succinocarboxamide synthase (296 aa).

The protein belongs to the SAICAR synthetase family.

The catalysed reaction is 5-amino-1-(5-phospho-D-ribosyl)imidazole-4-carboxylate + L-aspartate + ATP = (2S)-2-[5-amino-1-(5-phospho-beta-D-ribosyl)imidazole-4-carboxamido]succinate + ADP + phosphate + 2 H(+). It functions in the pathway purine metabolism; IMP biosynthesis via de novo pathway; 5-amino-1-(5-phospho-D-ribosyl)imidazole-4-carboxamide from 5-amino-1-(5-phospho-D-ribosyl)imidazole-4-carboxylate: step 1/2. This chain is Phosphoribosylaminoimidazole-succinocarboxamide synthase, found in Trichlorobacter lovleyi (strain ATCC BAA-1151 / DSM 17278 / SZ) (Geobacter lovleyi).